The sequence spans 342 residues: MRAPEFHANAMTSTGCDVCLDPQKSFAKLFKRTVILLAGPTGSGKTDVSLRLAPMIDGEIISVDSMQVYRGMDIGTAKVSWEDRQRIPHYLIDICHVQELFNAVDFYYQAIQACQNILSRNKVPILVGGTGFYFHTFLSGPPQGPSPDCDFRDKLALYIQEHGLSLLYENLCLKDPEYARTITKNDRNKIVRALEIIHLTGKKVSDHKWTKEASECQEYNCRGWFLSPPKELLRDTIHLRCQRMLEDDLIDEVHRLLKQGIRDNSSASRAIGYREWIEFIDQGSPAESYEAVKQKFITNTCHYTKKQRTWFKRYPIFRELPTLGLTAETIAAKIAEDYFLHG.

39–46 serves as a coordination point for ATP; it reads GPTGSGKT. 41–46 lines the substrate pocket; the sequence is TGSGKT. The interaction with substrate tRNA stretch occupies residues 64–67; that stretch reads DSMQ.

Belongs to the IPP transferase family. Monomer. Requires Mg(2+) as cofactor.

It carries out the reaction adenosine(37) in tRNA + dimethylallyl diphosphate = N(6)-dimethylallyladenosine(37) in tRNA + diphosphate. Its function is as follows. Catalyzes the transfer of a dimethylallyl group onto the adenine at position 37 in tRNAs that read codons beginning with uridine, leading to the formation of N6-(dimethylallyl)adenosine (i(6)A). This is tRNA dimethylallyltransferase from Chlamydia abortus (strain DSM 27085 / S26/3) (Chlamydophila abortus).